Here is a 65-residue protein sequence, read N- to C-terminus: uncharacterized protein (65 aa).

Helical transmembrane passes span 12-31 and 41-63; these read IVKW…LIVV and LVAR…AIIV.

The protein localises to the cell membrane. This is an uncharacterized protein from Halalkalibacterium halodurans (strain ATCC BAA-125 / DSM 18197 / FERM 7344 / JCM 9153 / C-125) (Bacillus halodurans).